The chain runs to 396 residues: Elongation factor Tu (396 aa).

Positions 10-205 constitute a tr-type G domain; it reads KPHVNIGTIG…ACDESIPDPV (196 aa). Residues 19-26 are G1; sequence GHVDHGKT. 19-26 serves as a coordination point for GTP; the sequence is GHVDHGKT. Thr-26 contributes to the Mg(2+) binding site. The tract at residues 62–66 is G2; it reads GITIN. The segment at 83-86 is G3; the sequence is DAPG. Residues 83–87 and 138–141 each bind GTP; these read DAPGH and NKCD. Residues 138–141 are G4; that stretch reads NKCD. A G5 region spans residues 175 to 177; it reads SAL.

It belongs to the TRAFAC class translation factor GTPase superfamily. Classic translation factor GTPase family. EF-Tu/EF-1A subfamily. In terms of assembly, monomer.

It is found in the cytoplasm. It carries out the reaction GTP + H2O = GDP + phosphate + H(+). Functionally, GTP hydrolase that promotes the GTP-dependent binding of aminoacyl-tRNA to the A-site of ribosomes during protein biosynthesis. This is Elongation factor Tu from Corynebacterium kroppenstedtii (strain DSM 44385 / JCM 11950 / CIP 105744 / CCUG 35717).